Here is a 125-residue protein sequence, read N- to C-terminus: Photoactive yellow protein (125 aa).

The PAS domain maps to 23 to 86 (LDGLAFGAIQ…GKFKEGVASG (64 aa)). Cys69 carries the S-(4-hydroxycinnamyl)cysteine modification.

The protein belongs to the photoactive yellow protein family. As to quaternary structure, monomer. In terms of processing, the 4-hydroxycinnamic acid (p-coumaric acid) chromophore is covalently bound via a thioester linkage.

In terms of biological role, photoactive blue light protein. Probably functions as a photoreceptor for a negative phototaxis response. The protein is Photoactive yellow protein (pyp) of Halorhodospira halophila (Ectothiorhodospira halophila).